Reading from the N-terminus, the 684-residue chain is Histamine oxidase (684 aa).

Position 316 to 327 (316 to 327) interacts with substrate; it reads YFDSGEYLVGRD. Aspartate 318 (proton acceptor) is an active-site residue. Cysteine 337 and cysteine 363 are joined by a disulfide. Residue 399 to 404 coordinates substrate; the sequence is VGNYDY. Tyrosine 402 (schiff-base intermediate with substrate; via topaquinone) is an active-site residue. Position 402 is a 2',4',5'-topaquinone (tyrosine 402). Cu cation is bound by residues histidine 451 and histidine 453. Ca(2+) is bound by residues aspartate 460, glutamate 500, tyrosine 590, and aspartate 601. Aspartate 460 provides a ligand contact to Mn(2+). Aspartate 601 is a Mn(2+) binding site. A Cu cation-binding site is contributed by histidine 612. The interval 647 to 684 is disordered; it reads SSAAGHCGTGSEREHAAPGGTAVGHSGPDTGGQGHCGH. The span at 675–684 shows a compositional bias: gly residues; that stretch reads DTGGQGHCGH.

Belongs to the copper/topaquinone oxidase family. In terms of assembly, homodimer. The cofactor is Cu cation. It depends on Zn(2+) as a cofactor. Requires Ca(2+) as cofactor. L-topaquinone serves as cofactor. Mn(2+) is required as a cofactor. Topaquinone (TPQ) is generated by copper-dependent autoxidation of a specific tyrosyl residue.

The protein resides in the cytoplasm. The enzyme catalyses a primary methyl amine + O2 + H2O = an aldehyde + H2O2 + NH4(+). It catalyses the reaction histamine + O2 + H2O = imidazole-4-acetaldehyde + H2O2 + NH4(+). Oxidizes histamine. Other amines including phenethylamine, tyramine, tryptamine, putrescine, and benzylamine also serve as substrate. This chain is Histamine oxidase, found in Arthrobacter globiformis.